We begin with the raw amino-acid sequence, 282 residues long: tRNA pseudouridine synthase B (282 aa).

Residue Asp-39 is the Nucleophile of the active site.

This sequence belongs to the pseudouridine synthase TruB family. Type 1 subfamily.

The enzyme catalyses uridine(55) in tRNA = pseudouridine(55) in tRNA. Responsible for synthesis of pseudouridine from uracil-55 in the psi GC loop of transfer RNAs. The chain is tRNA pseudouridine synthase B from Borreliella afzelii (strain PKo) (Borrelia afzelii).